The chain runs to 220 residues: Photosynthetic NDH subunit of lumenal location 3, chloroplastic (220 aa).

The transit peptide at 1–35 (MAHFIDLNSLTNTLPSLPKLPESRKTGKSSGFACR) directs the protein to the chloroplast. The N-terminal 42 residues, 36-77 (RTEEFQEPDSVQITRRMTLGFAVSIGLTGILGENNVSLAQDN), are a transit peptide targeting the thylakoid.

This sequence belongs to the PsbQ family. As to quaternary structure, part of the chloroplast NDH complex, composed of a mixture of chloroplast and nucleus encoded subunits. Component of the NDH lumenal subcomplex, at least composed of PnsL1, PnsL2, PnsL3, PnsL4 and PnsL5.

The protein localises to the plastid. Its subcellular location is the chloroplast thylakoid membrane. In terms of biological role, NDH shuttles electrons from NAD(P)H:plastoquinone, via FMN and iron-sulfur (Fe-S) centers, to quinones in the photosynthetic chain and possibly in a chloroplast respiratory chain. The immediate electron acceptor for the enzyme in this species is believed to be plastoquinone. Couples the redox reaction to proton translocation, and thus conserves the redox energy in a proton gradient. Required for both formation and activity of the chloroplast NAD(P)H dehydrogenase (NDH) complex. This chain is Photosynthetic NDH subunit of lumenal location 3, chloroplastic, found in Arabidopsis thaliana (Mouse-ear cress).